A 348-amino-acid chain; its full sequence is Succinylglutamate desuccinylase (348 aa).

Residues H67, E70, and H164 each coordinate Zn(2+). Residue E228 is part of the active site.

The protein belongs to the AspA/AstE family. Succinylglutamate desuccinylase subfamily. Zn(2+) is required as a cofactor.

It carries out the reaction N-succinyl-L-glutamate + H2O = L-glutamate + succinate. It participates in amino-acid degradation; L-arginine degradation via AST pathway; L-glutamate and succinate from L-arginine: step 5/5. Transforms N(2)-succinylglutamate into succinate and glutamate. This is Succinylglutamate desuccinylase from Shewanella denitrificans (strain OS217 / ATCC BAA-1090 / DSM 15013).